Consider the following 464-residue polypeptide: Siroheme synthase (464 aa).

Positions 1 to 203 are precorrin-2 dehydrogenase /sirohydrochlorin ferrochelatase; sequence MEFLPLFHNL…GQGAEAERLL (203 aa). NAD(+) is bound by residues 22 to 23 and 43 to 44; these read EI and PE. Ser128 carries the post-translational modification Phosphoserine. The segment at 216–464 is uroporphyrinogen-III C-methyltransferase; the sequence is GEVYLVGAGP…AWFEGAQATV (249 aa). Residue Pro225 participates in S-adenosyl-L-methionine binding. The active-site Proton acceptor is the Asp248. Lys270 serves as the catalytic Proton donor. Residues 301 to 303, Ile306, 331 to 332, Met383, and Gly412 contribute to the S-adenosyl-L-methionine site; these read GGD and TA.

It in the N-terminal section; belongs to the precorrin-2 dehydrogenase / sirohydrochlorin ferrochelatase family. The protein in the C-terminal section; belongs to the precorrin methyltransferase family.

It catalyses the reaction uroporphyrinogen III + 2 S-adenosyl-L-methionine = precorrin-2 + 2 S-adenosyl-L-homocysteine + H(+). The enzyme catalyses precorrin-2 + NAD(+) = sirohydrochlorin + NADH + 2 H(+). The catalysed reaction is siroheme + 2 H(+) = sirohydrochlorin + Fe(2+). It participates in cofactor biosynthesis; adenosylcobalamin biosynthesis; precorrin-2 from uroporphyrinogen III: step 1/1. Its pathway is cofactor biosynthesis; adenosylcobalamin biosynthesis; sirohydrochlorin from precorrin-2: step 1/1. The protein operates within porphyrin-containing compound metabolism; siroheme biosynthesis; precorrin-2 from uroporphyrinogen III: step 1/1. It functions in the pathway porphyrin-containing compound metabolism; siroheme biosynthesis; siroheme from sirohydrochlorin: step 1/1. It participates in porphyrin-containing compound metabolism; siroheme biosynthesis; sirohydrochlorin from precorrin-2: step 1/1. Its function is as follows. Multifunctional enzyme that catalyzes the SAM-dependent methylations of uroporphyrinogen III at position C-2 and C-7 to form precorrin-2 via precorrin-1. Then it catalyzes the NAD-dependent ring dehydrogenation of precorrin-2 to yield sirohydrochlorin. Finally, it catalyzes the ferrochelation of sirohydrochlorin to yield siroheme. The chain is Siroheme synthase from Pseudomonas savastanoi pv. phaseolicola (strain 1448A / Race 6) (Pseudomonas syringae pv. phaseolicola (strain 1448A / Race 6)).